The sequence spans 414 residues: 3-phosphoshikimate 1-carboxyvinyltransferase (414 aa).

3-phosphoshikimate-binding residues include lysine 20, serine 21, and arginine 25. Lysine 20 serves as a coordination point for phosphoenolpyruvate. Arginine 113 lines the phosphoenolpyruvate pocket. 3-phosphoshikimate-binding residues include serine 154, serine 155, glutamine 156, serine 181, aspartate 296, and lysine 323. Glutamine 156 contributes to the phosphoenolpyruvate binding site. The active-site Proton acceptor is aspartate 296. Residues arginine 327, arginine 371, and lysine 395 each coordinate phosphoenolpyruvate.

Belongs to the EPSP synthase family. Monomer.

Its subcellular location is the cytoplasm. The catalysed reaction is 3-phosphoshikimate + phosphoenolpyruvate = 5-O-(1-carboxyvinyl)-3-phosphoshikimate + phosphate. Its pathway is metabolic intermediate biosynthesis; chorismate biosynthesis. In terms of biological role, catalyzes the transfer of the enolpyruvyl moiety of phosphoenolpyruvate (PEP) to the 5-hydroxyl of shikimate-3-phosphate (S3P) to produce enolpyruvyl shikimate-3-phosphate and inorganic phosphate. The chain is 3-phosphoshikimate 1-carboxyvinyltransferase from Saccharolobus solfataricus (strain ATCC 35092 / DSM 1617 / JCM 11322 / P2) (Sulfolobus solfataricus).